A 696-amino-acid polypeptide reads, in one-letter code: MSFSNVLIMRQPDEGKCHICKRVFCCGKCRQKHQFKAHAIAVREPLGLRSAGGGIIEHRHQMESGATTIYVFCPICERRPLLLREEMHGELLAHIETCHLPLRCRKCQRNYTRVDDLREFSKCVDQQQSCTDVTGATETSKATLKKAANSTAISTQTSPSVTPISLINMRWKAKSRVTHEEFISDSVSSIRNLSSFSNSSIRRSIGQLGVNPSETMEKGKVIRSTSTPLHVESVFAKPKEPITFNASTGGHVSSIYHEEPSPTPESNPVQQQQQQQQPLQQRAWKMGARNKMSAATPLRQVMSKSIQKAFVEHGGMMVHQPPSAVVQRRVRLDLSEHSSHEAAGSSALDLRLSPAMRRTQSESSASEVNSGSSSSYSTSRNADLCKRQFLLSAQKLTTESIIITRTNSSSQKTSSTVYNSCESVEIIRSTSESAEVCHVPAITPIRVTGAGINKKQIKFETPPKSSQQMRSNGEGDETKDQFFTPEPGTPEIPERRHRQAIVPRQLSGEFSPKKDKPKEKGLAVMALISPPLQQPRVRPPLRECRQQRVYSGVQDVGEPEVVDAEEEDEVFRPTNASTCNDKKLEAPNSGRLWSLMSSMMRLPASLRGEREKDRDRDRDSDKENAGSGSLIRRCASIAGSLVRPSARDSSMEDQQCLKRKRTQTLDSQYCSPLSPSSSSKRYRIRPREPIERMRRQ.

Disordered stretches follow at residues 245–285, 336–379, and 457–492; these read NAST…RAWK, EHSS…YSTS, and IKFETPPKSSQQMRSNGEGDETKDQFFTPEPGTPEI. Composition is skewed to low complexity over residues 270–281 and 361–379; these read QQQQQQQQPLQQ and SESSASEVNSGSSSSYSTS. Positions 448–696 are rich in charged AA; the sequence is TGAGINKKQI…REPIERMRRQ (249 aa). Threonine 478, threonine 484, and threonine 489 each carry phosphothreonine. 2 short sequence motifs (nuclear localization signal) span residues 512-520 and 534-538; these read PKKDKPKEK and QPRVR. 2 disordered regions span residues 555–586 and 603–696; these read DVGEPEVVDAEEEDEVFRPTNASTCNDKKLEA and PASL…MRRQ. Positions 557–569 are enriched in acidic residues; that stretch reads GEPEVVDAEEEDE. Composition is skewed to basic and acidic residues over residues 607 to 624 and 685 to 696; these read RGEREKDRDRDRDSDKEN and RPREPIERMRRQ.

Its subcellular location is the nucleus envelope. The protein localises to the nucleus. The protein resides in the nucleoplasm. It is found in the cytoplasm. Functionally, cell cycle-dependent nuclear envelope component required for embryonic mitosis. The protein is Mitosis initiation protein fs(1)Ya (fs(1)Ya) of Drosophila melanogaster (Fruit fly).